The primary structure comprises 399 residues: Secreted RxLR effector protein 36 (399 aa).

The N-terminal stretch at M1–A21 is a signal peptide. The RxLR-dEER signature appears at R50–R71. N75 carries an N-linked (GlcNAc...) asparagine glycan. The disordered stretch occupies residues I126 to D145.

The protein belongs to the RxLR effector family.

Its subcellular location is the secreted. It is found in the host nucleus. Functionally, secreted effector that completely suppresses the host cell death induced by cell death-inducing proteins. This chain is Secreted RxLR effector protein 36, found in Plasmopara viticola (Downy mildew of grapevine).